Consider the following 204-residue polypeptide: Inositol diphosphatase DSP2 (204 aa).

Positions 1-27 (MQLEISPRQRSQQQKEEEGEHQQRAGE) are disordered. The span at 13-27 (QQKEEEGEHQQRAGE) shows a compositional bias: basic and acidic residues. Positions 51–203 (NFAEVNDGIF…SSLMHLTASQ (153 aa)) constitute a Tyrosine-protein phosphatase domain. A WPD loop important for active site topology region spans residues 107-119 (FGIDGSKELLVNI). Residues asparagine 118, isoleucine 119, and lysine 123 each coordinate 1D-myo-inositol hexakisphosphate. The Phosphocysteine intermediate role is filled by cysteine 143.

Belongs to the protein-tyrosine phosphatase family. Atypical dual-specificity phosphatase Siw14-like subfamily. In terms of tissue distribution, expressed in roots and young panicles.

The protein resides in the cytoplasm. The protein localises to the nucleus. It carries out the reaction 5-diphospho-1D-myo-inositol 1,2,3,4,6-pentakisphosphate + H2O = 1D-myo-inositol hexakisphosphate + phosphate + H(+). The catalysed reaction is 1,5-bis(diphospho)-1D-myo-inositol 2,3,4,6-tetrakisphosphate + H2O = 1-diphospho-1D-myo-inositol 2,3,4,5,6-pentakisphosphate + phosphate + 2 H(+). It catalyses the reaction 3,5-bis(diphospho)-1D-myo-inositol 1,2,4,6-tetrakisphosphate + H2O = 3-diphospho-1D-myo-inositol 1,2,4,5,6-pentakisphosphate + phosphate + 2 H(+). The enzyme catalyses 6-diphospho-1D-myo-inositol pentakisphosphate + H2O = 1D-myo-inositol hexakisphosphate + phosphate + H(+). Functionally, cleaves the beta-phosphate at the 5-position of soluble inositol pyrophosphates. Has highest activity on 5-diphosphoinositol 1,2,3,4,6-pentakisphosphate (5-InsP(7)). Acts as a negative regulator of defense responses against the fungal pathogen Magnaporthe oryzae. This is Inositol diphosphatase DSP2 from Oryza sativa subsp. japonica (Rice).